We begin with the raw amino-acid sequence, 530 residues long: GATA zinc finger domain-containing protein 4 (530 aa).

Disordered regions lie at residues 1–27 and 212–386; these read MSIN…FWDN and STVV…INNN. 3 stretches are compositionally biased toward low complexity: residues 7–17, 216–290, and 299–386; these read NNNKNNNNKNN, SNSP…FNNN, and NSNN…INNN. The GATA-type zinc finger occupies 494 to 518; sequence CSMCNIKESISWIKTMVNGQLCNAC.

The protein is GATA zinc finger domain-containing protein 4 (gtaD) of Dictyostelium discoideum (Social amoeba).